The sequence spans 194 residues: Imidazoleglycerol-phosphate dehydratase (194 aa).

Belongs to the imidazoleglycerol-phosphate dehydratase family.

It is found in the cytoplasm. It catalyses the reaction D-erythro-1-(imidazol-4-yl)glycerol 3-phosphate = 3-(imidazol-4-yl)-2-oxopropyl phosphate + H2O. It functions in the pathway amino-acid biosynthesis; L-histidine biosynthesis; L-histidine from 5-phospho-alpha-D-ribose 1-diphosphate: step 6/9. In Chloroherpeton thalassium (strain ATCC 35110 / GB-78), this protein is Imidazoleglycerol-phosphate dehydratase.